Consider the following 75-residue polypeptide: Large ribosomal subunit protein bL31 (75 aa).

Zn(2+)-binding residues include Cys-16, Cys-18, Cys-37, and Cys-40.

This sequence belongs to the bacterial ribosomal protein bL31 family. Type A subfamily. In terms of assembly, part of the 50S ribosomal subunit. The cofactor is Zn(2+).

In terms of biological role, binds the 23S rRNA. The protein is Large ribosomal subunit protein bL31 of Pseudomonas syringae pv. tomato (strain ATCC BAA-871 / DC3000).